We begin with the raw amino-acid sequence, 826 residues long: MEGHTDMEILRTVKGSSTGEVNVHLVARDSAGPHPQLPTTAFIIPTNAATLGLPSTALDVPYPREPVHVGALERVAGSEPVTATILPQLSTGTGTNSTVRLLDWTGVSAPLPGSGMRFRINEYAPLNMIGVERPRSPEQRHEGGMARRDAGIQHPDVHQDRQDITSLEPPVDASSCKCQACGPQQSSGLDVGSSGDRCSQPFQKRSVIVENSGCTIASELLKPMKKRKHKEYQSPSEESEPEAVKQGEGKDAEREPTPSTPENEEWSRSQLVSSEKKDGWSWESYLEEQKAVTAPVSLFQDSQAVTHNKNGFKLGMKLEGIDPQHPSMYFILTVAEVCGYRLRLHFDGYSECHDFWVNANSPDIHPAGWFEKTGHKLQLPKGYKEEEFSWSQYLRSTKAQAAPKHLFVSQSHSTPPVGFQVGMKLEAVDRMNPSLVCVASVTDVVDSRFLVHFDDWGDTYDYWCDPSSPYIHPVGWCQKQGKPLTPPQDYPDPDSFCWEKYLEETGTSAVPNWAFKVRPPHSFLVNMKLEAVDRRNPALIRVASVEDVEDHRIKLHFDGWSHNYDFWIDADHPDIHPAGWCSKTGHPLEPPLRPRESSSVSPGGCPPLSHRSPPHTKTSKYNFHHRKCPTPGCDGSGHVTGKFTAHHCLSGCPLAEKNQSRLKAELSDSETAARKKNPSNLSPRKKPRHQGRIGRPPKYRKIPEEDLQALPPSVVHQSLFMSTLPTHADRPLSVCWEQHCKLLPGVAGISASTVSKWTIEEVFGFVQTLTGSEDQARLFKDEMIDGEAFLLLTQADIVKIMSVKLGPALKIYNAILMFKNTDDAFK.

Ser-136 is modified (phosphoserine). Disordered regions lie at residues 167–197 (LEPPVDASSCKCQACGPQQSSGLDVGSSGDR) and 220–271 (LLKP…RSQL). The segment covering 242–256 (EAVKQGEGKDAEREP) has biased composition (basic and acidic residues). 3 MBT repeats span residues 280-380 (WSWE…LQLP), 388-487 (FSWS…LTPP), and 496-591 (FCWE…LEPP). Residues 453–460 (FDDWGDTY) form an interaction with monomethylated and dimethylated peptides region. The tract at residues 586–621 (HPLEPPLRPRESSSVSPGGCPPLSHRSPPHTKTSKY) is disordered. Positions 612–621 (SPPHTKTSKY) are enriched in basic residues. The segment at 619-662 (SKYNFHHRKCPTPGCDGSGHVTGKFTAHHCLSGCPLAEKNQSRL) adopts a CCHHC-type zinc-finger fold. Residues Cys-628, Cys-633, His-646, and Cys-652 each coordinate Zn(2+). The segment at 663-699 (KAELSDSETAARKKNPSNLSPRKKPRHQGRIGRPPKY) is disordered. Residues 683 to 699 (PRKKPRHQGRIGRPPKY) are compositionally biased toward basic residues. In terms of domain architecture, SAM spans 757–821 (WTIEEVFGFV…YNAILMFKNT (65 aa)).

Homodimer. Interacts with RB1/RB (when monomethylated at 'Lys-860'). Interacts with p53/TP53 (when monomethylated at 'Lys-382'). Interacts with CBX3, ETV6, KMT5A and VCP/p97. In terms of processing, ubiquitinated in a VCP/p97-dependent way following DNA damage, leading to its removal from DNA damage sites, promoting accessibility of H4K20me2 mark for DNA repair protein TP53BP1, which is then recruited to DNA damage sites. In terms of tissue distribution, highly expressed in brain, testis, eyes, and ES cells.

The protein localises to the nucleus. In terms of biological role, polycomb group (PcG) protein that specifically recognizes and binds mono- and dimethyllysine residues on target proteins, thereby acting as a 'reader' of a network of post-translational modifications. PcG proteins maintain the transcriptionally repressive state of genes: acts as a chromatin compaction factor by recognizing and binding mono- and dimethylated histone H1b/H1-4 at 'Lys-26' (H1bK26me1 and H1bK26me2) and histone H4 at 'Lys-20' (H4K20me1 and H4K20me2), leading to condense chromatin and repress transcription. Recognizes and binds p53/TP53 monomethylated at 'Lys-382', leading to repress p53/TP53-target genes. Also recognizes and binds RB1/RB monomethylated at 'Lys-860'. Participates in the ETV6-mediated repression. Probably plays a role in cell proliferation. Overexpression induces multinucleated cells, suggesting that it is required to accomplish normal mitosis. This chain is Lethal(3)malignant brain tumor-like protein 1 (L3mbtl1), found in Mus musculus (Mouse).